Reading from the N-terminus, the 1506-residue chain is DDB1- and CUL4-associated factor 1 (1506 aa).

Residues 141–499 are protein kinase-like; that stretch reads QPLRTYSTGL…STLEILNLED (359 aa). Ser202 and Ser254 each carry phosphoserine. Residues 241–275 form a disordered region; sequence RLDSSHKTSSRVNSATKPEEGGLKKNKSAKHGDRE. The Chromo domain maps to 561–592; the sequence is SYTHEQIVEMMEFLIEYGPAQLYWEPAEVFLK. N6-acetyllysine is present on Lys700. Position 827 is a phosphoserine (Ser827). The region spanning 845–877 is the LisH domain; the sequence is PEKELLLLIRNHLISKGLGETATVLTREADLPM. Thr887 bears the Phosphothreonine mark. Phosphoserine is present on residues Ser894 and Ser897. 2 disordered regions span residues 916–946 and 977–999; these read ATVG…GPSY and KSDH…HLPS. The span at 924–943 shows a compositional bias: pro residues; the sequence is SAPPAHPPPRPPQGSLPLPG. Residues Ser978 and Ser999 each carry the phosphoserine modification. 5 WD repeats span residues 1090-1129, 1132-1173, 1175-1212, 1214-1246, and 1247-1289; these read EDES…EEAS, CHNS…DMKH, FTED…KLLT, FNPD…WDVR, and SAQA…LLHT. The segment at 1090 to 1289 is WD repeat-like region; that stretch reads EDESGFTCCA…DLRTFHLLHT (200 aa). 2 short sequence motifs (DWD box) span residues 1241 to 1248 and 1277 to 1284; these read VLWDVRSA and EIWDLRTF. At Ser1327 the chain carries Phosphoserine. The tract at residues 1392–1506 is disordered; sequence RLAEDEDEEE…EDDIILSLNE (115 aa). Composition is skewed to acidic residues over residues 1395-1482 and 1489-1500; these read EDED…EEVE and DSSDNSDLEDDI. The tract at residues 1417-1506 is interaction with NF2; sequence DDDTDDLDEL…EDDIILSLNE (90 aa).

The protein belongs to the VPRBP/DCAF1 family. As to quaternary structure, component of the DCX (DDB1-CUL4-X-box) E3 ubiquitin-protein ligase complex, named CUL4A-RBX1-DDB1-DCAF1/VPRBP complex. Interacts with DDB1; the interaction is direct. Also forms a ternary complex with DDA1 and DDB1. Interacts with NF2 (via FERM domain). Component of the EDVP complex, a E3 ligase complex containing DYRK2, EDD/UBR5, DDB1 and DCAF1. Interacts with DYRK2; the interaction is direct. Interacts with RAG1; the interaction is direct. Interacts with LLGL1 and LLGL2. Interacts with histone H3. Interacts with ESR1 and LATS1; probably recruited by LATS1 to promote ESR1 ubiquitination and ubiquitin-mediated proteasomal degradation. Directly interacts with TET1, TET2 and TET3 (via C-terminus). Interacts with CEP78; promoting DCAF1 localization to centrosomes. Widely expressed. Expressed in oocytes and zygotes (at protein level).

It localises to the cytoplasm. The protein resides in the nucleus. Its subcellular location is the cytoskeleton. It is found in the microtubule organizing center. The protein localises to the centrosome. The catalysed reaction is L-seryl-[protein] + ATP = O-phospho-L-seryl-[protein] + ADP + H(+). It carries out the reaction L-threonyl-[protein] + ATP = O-phospho-L-threonyl-[protein] + ADP + H(+). It participates in protein modification; protein ubiquitination. In terms of biological role, acts both as a substrate recognition component of E3 ubiquitin-protein ligase complexes and as an atypical serine/threonine-protein kinase, playing key roles in various processes such as cell cycle, telomerase regulation and histone modification. Probable substrate-specific adapter of a DCX (DDB1-CUL4-X-box) E3 ubiquitin-protein ligase complex, named CUL4A-RBX1-DDB1-DCAF1/VPRBP complex, which mediates ubiquitination and proteasome-dependent degradation of proteins such as NF2. Involved in the turnover of methylated proteins: recognizes and binds methylated proteins via its chromo domain, leading to ubiquitination of target proteins by the RBX1-DDB1-DCAF1/VPRBP complex. The CUL4A-RBX1-DDB1-DCAF1/VPRBP complex is also involved in B-cell development: DCAF1 is recruited by RAG1 to ubiquitinate proteins, leading to limit error-prone repair during V(D)J recombination. Also part of the EDVP complex, an E3 ligase complex that mediates ubiquitination of proteins such as TERT, leading to TERT degradation and telomerase inhibition. The EDVP complex also mediates ubiquitination and degradation of CCP110. Also acts as an atypical serine/threonine-protein kinase that specifically mediates phosphorylation of 'Thr-120' of histone H2A (H2AT120ph) in a nucleosomal context, thereby repressing transcription. H2AT120ph is present in the regulatory region of many tumor suppresor genes, down-regulates their transcription and is present at high level in a number of tumors. Involved in JNK-mediated apoptosis during cell competition process via its interaction with LLGL1 and LLGL2. By acting on TET dioxygenses, essential for oocyte maintenance at the primordial follicle stage, hence essential for female fertility. The polypeptide is DDB1- and CUL4-associated factor 1 (Mus musculus (Mouse)).